Here is a 316-residue protein sequence, read N- to C-terminus: RNA interference defective protein 11 (316 aa).

The segment at 183 to 218 (CYINFNCQTSKVMFGCGHVYCEQCLNSWNDKPCSVC) adopts an RING-type; degenerate zinc-finger fold.

As to quaternary structure, interacts (via RING-type zinc finger domain) with rde-10.

In complex with rde-10, required in the endogenous and exogenous siRNA pathway for biogenesis and accumulation of secondary small interfering RNA (siRNA) intermediates, such as 22G-siRNAs derived from ergo-1 targets. The protein is RNA interference defective protein 11 of Caenorhabditis elegans.